A 284-amino-acid chain; its full sequence is 2-dehydro-3-deoxyphosphooctonate aldolase (284 aa).

It belongs to the KdsA family.

The protein resides in the cytoplasm. The enzyme catalyses D-arabinose 5-phosphate + phosphoenolpyruvate + H2O = 3-deoxy-alpha-D-manno-2-octulosonate-8-phosphate + phosphate. It participates in carbohydrate biosynthesis; 3-deoxy-D-manno-octulosonate biosynthesis; 3-deoxy-D-manno-octulosonate from D-ribulose 5-phosphate: step 2/3. It functions in the pathway bacterial outer membrane biogenesis; lipopolysaccharide biosynthesis. The sequence is that of 2-dehydro-3-deoxyphosphooctonate aldolase from Paraburkholderia xenovorans (strain LB400).